A 446-amino-acid polypeptide reads, in one-letter code: Probable glycine dehydrogenase (decarboxylating) subunit 1 (446 aa).

This sequence belongs to the GcvP family. N-terminal subunit subfamily. As to quaternary structure, the glycine cleavage system is composed of four proteins: P, T, L and H. In this organism, the P 'protein' is a heterodimer of two subunits.

It catalyses the reaction N(6)-[(R)-lipoyl]-L-lysyl-[glycine-cleavage complex H protein] + glycine + H(+) = N(6)-[(R)-S(8)-aminomethyldihydrolipoyl]-L-lysyl-[glycine-cleavage complex H protein] + CO2. In terms of biological role, the glycine cleavage system catalyzes the degradation of glycine. The P protein binds the alpha-amino group of glycine through its pyridoxal phosphate cofactor; CO(2) is released and the remaining methylamine moiety is then transferred to the lipoamide cofactor of the H protein. This Xanthobacter autotrophicus (strain ATCC BAA-1158 / Py2) protein is Probable glycine dehydrogenase (decarboxylating) subunit 1.